The chain runs to 310 residues: Nitric oxide synthase-interacting protein homolog (310 aa).

Over residues 115–124 (FSAIESTPSR) the composition is skewed to polar residues. Residues 115 to 141 (FSAIESTPSRTGAVATPRPEVGSLKRQ) are disordered.

This sequence belongs to the NOSIP family.

Its subcellular location is the cytoplasm. The protein resides in the nucleus. Negatively regulates nitric oxide production by inducing nitric oxide synthase translocation to actin cytoskeleton and inhibiting its enzymatic activity. This chain is Nitric oxide synthase-interacting protein homolog, found in Caenorhabditis elegans.